The following is a 137-amino-acid chain: S-adenosylmethionine decarboxylase proenzyme (137 aa).

The Schiff-base intermediate with substrate; via pyruvic acid role is filled by serine 63. Serine 63 carries the pyruvic acid (Ser); by autocatalysis modification. The Proton acceptor; for processing activity role is filled by histidine 68. Residue cysteine 83 is the Proton donor; for catalytic activity of the active site.

It belongs to the prokaryotic AdoMetDC family. Type 1 subfamily. Heterotetramer of two alpha and two beta chains arranged as a dimer of alpha/beta heterodimers. Pyruvate serves as cofactor. In terms of processing, is synthesized initially as an inactive proenzyme. Formation of the active enzyme involves a self-maturation process in which the active site pyruvoyl group is generated from an internal serine residue via an autocatalytic post-translational modification. Two non-identical subunits are generated from the proenzyme in this reaction, and the pyruvate is formed at the N-terminus of the alpha chain, which is derived from the carboxyl end of the proenzyme. The post-translation cleavage follows an unusual pathway, termed non-hydrolytic serinolysis, in which the side chain hydroxyl group of the serine supplies its oxygen atom to form the C-terminus of the beta chain, while the remainder of the serine residue undergoes an oxidative deamination to produce ammonia and the pyruvoyl group blocking the N-terminus of the alpha chain.

The enzyme catalyses S-adenosyl-L-methionine + H(+) = S-adenosyl 3-(methylsulfanyl)propylamine + CO2. Its pathway is amine and polyamine biosynthesis; S-adenosylmethioninamine biosynthesis; S-adenosylmethioninamine from S-adenosyl-L-methionine: step 1/1. In terms of biological role, catalyzes the decarboxylation of S-adenosylmethionine to S-adenosylmethioninamine (dcAdoMet), the propylamine donor required for the synthesis of the polyamines spermine and spermidine from the diamine putrescine. This Fervidobacterium nodosum (strain ATCC 35602 / DSM 5306 / Rt17-B1) protein is S-adenosylmethionine decarboxylase proenzyme.